A 297-amino-acid polypeptide reads, in one-letter code: 4-hydroxy-tetrahydrodipicolinate synthase (297 aa).

Pyruvate is bound at residue Thr46. The active-site Proton donor/acceptor is Tyr134. Lys162 acts as the Schiff-base intermediate with substrate in catalysis. Ile209 lines the pyruvate pocket.

The protein belongs to the DapA family. As to quaternary structure, homotetramer; dimer of dimers.

Its subcellular location is the cytoplasm. It catalyses the reaction L-aspartate 4-semialdehyde + pyruvate = (2S,4S)-4-hydroxy-2,3,4,5-tetrahydrodipicolinate + H2O + H(+). Its pathway is amino-acid biosynthesis; L-lysine biosynthesis via DAP pathway; (S)-tetrahydrodipicolinate from L-aspartate: step 3/4. Functionally, catalyzes the condensation of (S)-aspartate-beta-semialdehyde [(S)-ASA] and pyruvate to 4-hydroxy-tetrahydrodipicolinate (HTPA). This Methanosphaera stadtmanae (strain ATCC 43021 / DSM 3091 / JCM 11832 / MCB-3) protein is 4-hydroxy-tetrahydrodipicolinate synthase.